Consider the following 268-residue polypeptide: Tryptophan synthase alpha chain (268 aa).

Catalysis depends on proton acceptor residues Glu49 and Asp60.

It belongs to the TrpA family. As to quaternary structure, tetramer of two alpha and two beta chains.

It carries out the reaction (1S,2R)-1-C-(indol-3-yl)glycerol 3-phosphate + L-serine = D-glyceraldehyde 3-phosphate + L-tryptophan + H2O. It participates in amino-acid biosynthesis; L-tryptophan biosynthesis; L-tryptophan from chorismate: step 5/5. Its function is as follows. The alpha subunit is responsible for the aldol cleavage of indoleglycerol phosphate to indole and glyceraldehyde 3-phosphate. This is Tryptophan synthase alpha chain from Escherichia coli O139:H28 (strain E24377A / ETEC).